The chain runs to 160 residues: Large ribosomal subunit protein uL16 (160 aa).

Positions 138 to 160 (INLSSDSSGEGKTGKDSKEEVKK) are disordered. Residues 149–160 (KTGKDSKEEVKK) show a composition bias toward basic and acidic residues.

Belongs to the universal ribosomal protein uL16 family. In terms of assembly, part of the 50S ribosomal subunit.

Binds 23S rRNA and is also seen to make contacts with the A and possibly P site tRNAs. In Prochlorococcus marinus subsp. pastoris (strain CCMP1986 / NIES-2087 / MED4), this protein is Large ribosomal subunit protein uL16.